A 329-amino-acid polypeptide reads, in one-letter code: Mas-related G-protein coupled receptor member X2 (329 aa).

Residues 1-33 (MDPTTPAWRTESTTMNGNDQALPLLCGKEILIS) are Extracellular-facing. A helical transmembrane segment spans residues 34-54 (VFLILFIALVGLVGNGFVLWL). Over 55–63 (LGFRMRRNA) the chain is Cytoplasmic. A helical transmembrane segment spans residues 64 to 84 (FSVYVLSLAGADFLFLCFQII). The Extracellular portion of the chain corresponds to 85 to 96 (NCLVYLSNFFCS). A helical transmembrane segment spans residues 97-117 (SSINFPSFFTTVMTCAYLAGL). Residues 118 to 144 (SMLSTISTERCLSVLWPIWYRCRRPRH) are Cytoplasmic-facing. A helical transmembrane segment spans residues 145–165 (LSAVACVLLWALSLLLSILEG). At 166 to 183 (KFCGLFGDGDSGWCQTFD) the chain is on the extracellular side. A helical transmembrane segment spans residues 184–204 (LITAAWLIFLFMVLCGSSLAL). Residues 205–227 (LVRILCGSRGLPLTRLYLTILLT) are Cytoplasmic-facing. A helical transmembrane segment spans residues 228-248 (VLVFLLCGLPFGIQWFLILWI). At 249–263 (WKNSDVLFCHIHPVS) the chain is on the extracellular side. The chain crosses the membrane as a helical span at residues 264 to 284 (VVLSSLNSSANPIIYFFVGSF). At 285–329 (RKQWQLQQPILKLALQRALQDIAEVDHSEGCFRQGTPEMSRSSLV) the chain is on the cytoplasmic side.

Belongs to the G-protein coupled receptor 1 family. Mas subfamily.

The protein localises to the cell membrane. Its function is as follows. Mast cell-specific receptor for basic secretagogues, i.e. cationic amphiphilic drugs, as well as endo- or exogenous peptides, consisting of a basic head group and a hydrophobic core. Recognizes and binds small molecules containing a cyclized tetrahydroisoquinoline (THIQ), such as non-steroidal neuromuscular blocking drugs (NMBDs), including tubocurarine and atracurium. In response to these compounds, mediates pseudo-allergic reactions characterized by histamine release, inflammation and airway contraction. The chain is Mas-related G-protein coupled receptor member X2 (MRGPRX2) from Gorilla gorilla gorilla (Western lowland gorilla).